Consider the following 144-residue polypeptide: Large-conductance mechanosensitive channel (144 aa).

The next 2 membrane-spanning stretches (helical) occupy residues 16–36 and 86–106; these read VIDL…VDSV and GNFL…FLMV.

This sequence belongs to the MscL family. As to quaternary structure, homopentamer.

The protein localises to the cell inner membrane. Channel that opens in response to stretch forces in the membrane lipid bilayer. May participate in the regulation of osmotic pressure changes within the cell. In Cupriavidus pinatubonensis (strain JMP 134 / LMG 1197) (Cupriavidus necator (strain JMP 134)), this protein is Large-conductance mechanosensitive channel.